The chain runs to 413 residues: Elongation factor 1-alpha (413 aa).

Residues 5–211 (KEHINLAFIG…DNLAAPEKPV (207 aa)) enclose the tr-type G domain. A G1 region spans residues 14–21 (GHVDHGKS). Residue 14-21 (GHVDHGKS) participates in GTP binding. Residue Ser-21 participates in Mg(2+) binding. Residues 60-64 (GVTID) are G2. The segment at 81–84 (DCPG) is G3. GTP is bound by residues 81–85 (DCPGH) and 136–139 (NKID). The interval 136-139 (NKID) is G4. The interval 175 to 177 (SAF) is G5.

It belongs to the TRAFAC class translation factor GTPase superfamily. Classic translation factor GTPase family. EF-Tu/EF-1A subfamily.

Its subcellular location is the cytoplasm. The catalysed reaction is GTP + H2O = GDP + phosphate + H(+). In terms of biological role, GTP hydrolase that promotes the GTP-dependent binding of aminoacyl-tRNA to the A-site of ribosomes during protein biosynthesis. This Methanobrevibacter smithii (strain ATCC 35061 / DSM 861 / OCM 144 / PS) protein is Elongation factor 1-alpha.